The following is a 150-amino-acid chain: Ribonuclease H (150 aa).

In terms of domain architecture, RNase H type-1 spans 1–141 (MKSIEVHTDG…VDVLARNQAT (141 aa)). Mg(2+)-binding residues include aspartate 9, glutamate 47, aspartate 69, and aspartate 133.

This sequence belongs to the RNase H family. In terms of assembly, monomer. It depends on Mg(2+) as a cofactor.

It is found in the cytoplasm. The catalysed reaction is Endonucleolytic cleavage to 5'-phosphomonoester.. Endonuclease that specifically degrades the RNA of RNA-DNA hybrids. The chain is Ribonuclease H from Xanthomonas oryzae pv. oryzae (strain MAFF 311018).